Reading from the N-terminus, the 52-residue chain is uncharacterized protein (52 aa).

2 helical membrane-spanning segments follow: residues 4 to 24 and 25 to 45; these read IIIP…ISLE and MSIV…FLFV.

It is found in the cell membrane. This is an uncharacterized protein from Bacillus subtilis (strain 168).